A 465-amino-acid polypeptide reads, in one-letter code: Iron-sulfur cluster assembly SufBD family protein SH2035 (465 aa).

It belongs to the iron-sulfur cluster assembly SufBD family.

The protein is Iron-sulfur cluster assembly SufBD family protein SH2035 of Staphylococcus haemolyticus (strain JCSC1435).